The following is a 433-amino-acid chain: UDP-N-acetylglucosamine 1-carboxyvinyltransferase (433 aa).

34–35 (KN) is a binding site for phosphoenolpyruvate. Arg104 contacts UDP-N-acetyl-alpha-D-glucosamine. Cys128 (proton donor) is an active-site residue. A 2-(S-cysteinyl)pyruvic acid O-phosphothioketal modification is found at Cys128. Residues Asp320 and Ile342 each contribute to the UDP-N-acetyl-alpha-D-glucosamine site.

This sequence belongs to the EPSP synthase family. MurA subfamily.

Its subcellular location is the cytoplasm. It carries out the reaction phosphoenolpyruvate + UDP-N-acetyl-alpha-D-glucosamine = UDP-N-acetyl-3-O-(1-carboxyvinyl)-alpha-D-glucosamine + phosphate. Its pathway is cell wall biogenesis; peptidoglycan biosynthesis. Its function is as follows. Cell wall formation. Adds enolpyruvyl to UDP-N-acetylglucosamine. In Synechococcus sp. (strain CC9605), this protein is UDP-N-acetylglucosamine 1-carboxyvinyltransferase.